We begin with the raw amino-acid sequence, 335 residues long: Histidinol-phosphate aminotransferase (335 aa).

The residue at position 202 (K202) is an N6-(pyridoxal phosphate)lysine.

Belongs to the class-II pyridoxal-phosphate-dependent aminotransferase family. Histidinol-phosphate aminotransferase subfamily. As to quaternary structure, homodimer. Pyridoxal 5'-phosphate serves as cofactor.

It carries out the reaction L-histidinol phosphate + 2-oxoglutarate = 3-(imidazol-4-yl)-2-oxopropyl phosphate + L-glutamate. It functions in the pathway amino-acid biosynthesis; L-histidine biosynthesis; L-histidine from 5-phospho-alpha-D-ribose 1-diphosphate: step 7/9. This is Histidinol-phosphate aminotransferase from Thermotoga sp. (strain RQ2).